Consider the following 339-residue polypeptide: Retinol dehydrogenase 10-A (339 aa).

The helical; Signal-anchor transmembrane segment at Ile-3–Phe-23 threads the bilayer. Val-40 to Val-64 serves as a coordination point for NADP(+). Substrate is bound at residue Ser-195. Tyr-208 functions as the Proton acceptor in the catalytic mechanism.

Belongs to the short-chain dehydrogenases/reductases (SDR) family.

The protein resides in the microsome membrane. It is found in the endoplasmic reticulum membrane. The enzyme catalyses all-trans-retinol + NADP(+) = all-trans-retinal + NADPH + H(+). It functions in the pathway cofactor metabolism; retinol metabolism. Retinol dehydrogenase with a clear preference for NADP. Converts all-trans-retinol to all-trans-retinal. Has no detectable activity towards 11-cis-retinol, 9-cis-retinol and 13-cis-retinol. The protein is Retinol dehydrogenase 10-A (rdh10a) of Danio rerio (Zebrafish).